We begin with the raw amino-acid sequence, 437 residues long: Adenylosuccinate synthetase (437 aa).

GTP-binding positions include 12–18 (GDEGKGK) and 40–42 (GHT). The active-site Proton acceptor is the aspartate 13. 2 residues coordinate Mg(2+): aspartate 13 and glycine 40. IMP is bound by residues 13–16 (DEGK), 38–41 (NAGH), threonine 128, arginine 142, glutamine 223, threonine 238, and arginine 302. Histidine 41 (proton donor) is an active-site residue. 298 to 304 (TTTGRRR) contributes to the substrate binding site. GTP is bound by residues arginine 304, 330 to 332 (KLD), and 412 to 414 (SLG).

The protein belongs to the adenylosuccinate synthetase family. In terms of assembly, homodimer. Mg(2+) serves as cofactor.

The protein resides in the cytoplasm. The enzyme catalyses IMP + L-aspartate + GTP = N(6)-(1,2-dicarboxyethyl)-AMP + GDP + phosphate + 2 H(+). It functions in the pathway purine metabolism; AMP biosynthesis via de novo pathway; AMP from IMP: step 1/2. Functionally, plays an important role in the de novo pathway of purine nucleotide biosynthesis. Catalyzes the first committed step in the biosynthesis of AMP from IMP. In Synechococcus sp. (strain CC9311), this protein is Adenylosuccinate synthetase.